The chain runs to 372 residues: Uroporphyrinogen decarboxylase (372 aa).

Substrate-binding positions include 35 to 39 (RQAGR), D85, Y166, S221, and H342.

This sequence belongs to the uroporphyrinogen decarboxylase family. As to quaternary structure, homodimer.

Its subcellular location is the cytoplasm. It carries out the reaction uroporphyrinogen III + 4 H(+) = coproporphyrinogen III + 4 CO2. The protein operates within porphyrin-containing compound metabolism; protoporphyrin-IX biosynthesis; coproporphyrinogen-III from 5-aminolevulinate: step 4/4. Functionally, catalyzes the decarboxylation of four acetate groups of uroporphyrinogen-III to yield coproporphyrinogen-III. This chain is Uroporphyrinogen decarboxylase, found in Methylibium petroleiphilum (strain ATCC BAA-1232 / LMG 22953 / PM1).